Reading from the N-terminus, the 314-residue chain is DNA-directed RNA polymerase subunit alpha (314 aa).

The segment at 1-229 is alpha N-terminal domain (alpha-NTD); that stretch reads MLESKLKAPV…EHLNYFANPE (229 aa). An alpha C-terminal domain (alpha-CTD) region spans residues 246-314; sequence SAEEDLDLPL…LAKKGFTLKE (69 aa).

The protein belongs to the RNA polymerase alpha chain family. Homodimer. The RNAP catalytic core consists of 2 alpha, 1 beta, 1 beta' and 1 omega subunit. When a sigma factor is associated with the core the holoenzyme is formed, which can initiate transcription.

The enzyme catalyses RNA(n) + a ribonucleoside 5'-triphosphate = RNA(n+1) + diphosphate. In terms of biological role, DNA-dependent RNA polymerase catalyzes the transcription of DNA into RNA using the four ribonucleoside triphosphates as substrates. This Thermus aquaticus protein is DNA-directed RNA polymerase subunit alpha (rpoA).